A 73-amino-acid chain; its full sequence is Nodulin-1 (73 aa).

Residues 1–23 (MERKTLASLCFFLIVLLAAQVVA) form the signal peptide. 3 disulfide bridges follow: cysteine 39–cysteine 64, cysteine 49–cysteine 71, and cysteine 53–cysteine 73.

Expressed in nodules, but not in leaves, stems, flowers and roots. In developing nodules, expressed close to the infection threads.

It is found in the secreted. In terms of biological role, nodulation-related protein probably involved in the infection process. The chain is Nodulin-1 (N1) from Medicago truncatula (Barrel medic).